Consider the following 523-residue polypeptide: Acetyl-CoA hydrolase (523 aa).

277-281 (GIGNI) serves as a coordination point for CoA. Residue Glu302 is the 5-glutamyl coenzyme A thioester intermediate of the active site. Residues Asn392 and Gly396 each contribute to the CoA site.

Belongs to the acetyl-CoA hydrolase/transferase family.

It localises to the cytoplasm. It catalyses the reaction acetyl-CoA + H2O = acetate + CoA + H(+). In terms of biological role, presumably involved in regulating the intracellular acetyl-CoA pool for fatty acid and cholesterol synthesis and fatty acid oxidation. This is Acetyl-CoA hydrolase (ACH1) from Eremothecium gossypii (strain ATCC 10895 / CBS 109.51 / FGSC 9923 / NRRL Y-1056) (Yeast).